Reading from the N-terminus, the 347-residue chain is NADH-ubiquinone oxidoreductase chain 2 (347 aa).

The next 10 membrane-spanning stretches (helical) occupy residues P3–S23, H25–M45, A66–I86, F111–L131, I149–G169, I178–P198, M201–L221, I237–L257, D274–M294, and L325–I345.

It belongs to the complex I subunit 2 family. As to quaternary structure, core subunit of respiratory chain NADH dehydrogenase (Complex I) which is composed of 45 different subunits. Interacts with TMEM242.

It is found in the mitochondrion inner membrane. The enzyme catalyses a ubiquinone + NADH + 5 H(+)(in) = a ubiquinol + NAD(+) + 4 H(+)(out). Its function is as follows. Core subunit of the mitochondrial membrane respiratory chain NADH dehydrogenase (Complex I) which catalyzes electron transfer from NADH through the respiratory chain, using ubiquinone as an electron acceptor. Essential for the catalytic activity and assembly of complex I. This chain is NADH-ubiquinone oxidoreductase chain 2, found in Vulpes vulpes (Red fox).